A 274-amino-acid chain; its full sequence is NH(3)-dependent NAD(+) synthetase (274 aa).

Residue 46-53 participates in ATP binding; sequence GISGGQDS. Residue Asp52 coordinates Mg(2+). Residue Arg140 participates in deamido-NAD(+) binding. An ATP-binding site is contributed by Thr160. Glu165 contacts Mg(2+). Deamido-NAD(+) contacts are provided by Lys173 and Asp180. ATP contacts are provided by Lys189 and Thr211. Position 260 to 261 (260 to 261) interacts with deamido-NAD(+); that stretch reads HK.

Belongs to the NAD synthetase family. Homodimer.

It carries out the reaction deamido-NAD(+) + NH4(+) + ATP = AMP + diphosphate + NAD(+) + H(+). It functions in the pathway cofactor biosynthesis; NAD(+) biosynthesis; NAD(+) from deamido-NAD(+) (ammonia route): step 1/1. Functionally, catalyzes the ATP-dependent amidation of deamido-NAD to form NAD. Uses ammonia as a nitrogen source. The polypeptide is NH(3)-dependent NAD(+) synthetase (Pectobacterium atrosepticum (strain SCRI 1043 / ATCC BAA-672) (Erwinia carotovora subsp. atroseptica)).